The sequence spans 342 residues: L-threonine 3-dehydrogenase (342 aa).

Cys-38 is a binding site for Zn(2+). Active-site charge relay system residues include Thr-40 and His-43. Residues His-63, Glu-64, Cys-93, Cys-96, Cys-99, and Cys-107 each contribute to the Zn(2+) site. Residues Ile-175, Asp-195, Arg-200, 262 to 264, and 286 to 287 each bind NAD(+); these read LGI and IY.

Belongs to the zinc-containing alcohol dehydrogenase family. Homotetramer. The cofactor is Zn(2+).

It is found in the cytoplasm. It catalyses the reaction L-threonine + NAD(+) = (2S)-2-amino-3-oxobutanoate + NADH + H(+). It participates in amino-acid degradation; L-threonine degradation via oxydo-reductase pathway; glycine from L-threonine: step 1/2. Functionally, catalyzes the NAD(+)-dependent oxidation of L-threonine to 2-amino-3-ketobutyrate. The protein is L-threonine 3-dehydrogenase of Aeromonas hydrophila subsp. hydrophila (strain ATCC 7966 / DSM 30187 / BCRC 13018 / CCUG 14551 / JCM 1027 / KCTC 2358 / NCIMB 9240 / NCTC 8049).